A 142-amino-acid chain; its full sequence is Transcriptional regulator MraZ (142 aa).

2 consecutive SpoVT-AbrB domains span residues 5–46 and 75–118; these read THPV…DRSE and AAAQ…DSEA.

It belongs to the MraZ family. Forms oligomers.

The protein resides in the cytoplasm. It localises to the nucleoid. The chain is Transcriptional regulator MraZ from Tropheryma whipplei (strain TW08/27) (Whipple's bacillus).